We begin with the raw amino-acid sequence, 421 residues long: Enolase (421 aa).

Q165 provides a ligand contact to (2R)-2-phosphoglycerate. E207 (proton donor) is an active-site residue. 3 residues coordinate Mg(2+): D244, E285, and D312. K337, R366, S367, and K388 together coordinate (2R)-2-phosphoglycerate. The Proton acceptor role is filled by K337.

The protein belongs to the enolase family. Mg(2+) is required as a cofactor.

The protein resides in the cytoplasm. It localises to the secreted. It is found in the cell surface. The enzyme catalyses (2R)-2-phosphoglycerate = phosphoenolpyruvate + H2O. It participates in carbohydrate degradation; glycolysis; pyruvate from D-glyceraldehyde 3-phosphate: step 4/5. In terms of biological role, catalyzes the reversible conversion of 2-phosphoglycerate (2-PG) into phosphoenolpyruvate (PEP). It is essential for the degradation of carbohydrates via glycolysis. The sequence is that of Enolase from Ehrlichia ruminantium (strain Welgevonden).